The following is a 559-amino-acid chain: MSQAHRHLALLLPAEAVLCAAAMRFQDVLSNGRTAPVTNHKKIQGWSSDQNKWNEKLYPFWEDNDPRWKDCWKGGKVTTKLVTDSPALVGSNVTFVVTLQFPKCQKEDDDGNIIYQRNCTPDSPAAQDQYVYNWTEWIDNCGWENCTSNHSHNVFPDGKPFPHYPGWRRRNFVYLFHTVGQYYQTIGRSSANFSVNTANITLGKHIMAVSIYRRGHSTYVPIARASTTYVVTDKIPILVSMSQKHDRNISDSIFIKDSPITFDVKIHDPSYYLNDSAISYKWNFGDGSGLFVESGATTSHTFSLQGNFTLNLTVQAIIPVPCKPVTPTPSLPTPAVTTDASSNSDPSAPNEMAEDNPDGGCHIYRYGYYTAGITIVEGILEVNIIQMTSIQMTESQAENPLVDFVVTCQGSFPTDVCTAVSDPTCQVSQGMVCDPVVVTDECVLTIRRAFDEPGTYCINITLGDDTSQALASALISVNGGSSSGTTKGVFIFLGLLAVFGAIGAFVLYKRYKQYKPIERSAGQAENQEGLSAYVSNFKAFFFPKSTERNPLLKSKPGIV.

Residues 1–22 (MSQAHRHLALLLPAEAVLCAAA) form the signal peptide. Residues 23–487 (MRFQDVLSNG…NGGSSSGTTK (465 aa)) are Extracellular-facing. 10 N-linked (GlcNAc...) asparagine glycosylation sites follow: Asn-92, Asn-133, Asn-145, Asn-149, Asn-192, Asn-199, Asn-248, Asn-274, Asn-307, and Asn-311. One can recognise a PKD domain in the interval 239–326 (VSMSQKHDRN…IIPVPCKPVT (88 aa)). A disordered region spans residues 329-356 (PSLPTPAVTTDASSNSDPSAPNEMAEDN). Residues 335–347 (AVTTDASSNSDPS) show a composition bias toward polar residues. Asn-459 is a glycosylation site (N-linked (GlcNAc...) asparagine). The helical transmembrane segment at 488 to 508 (GVFIFLGLLAVFGAIGAFVLY) threads the bilayer. The Cytoplasmic segment spans residues 509 to 559 (KRYKQYKPIERSAGQAENQEGLSAYVSNFKAFFFPKSTERNPLLKSKPGIV).

This sequence belongs to the PMEL/NMB family. As to expression, melanocyte-specific, restricted to the pigmented layer of the retina and the epidermis.

It localises to the membrane. Could be involved in melanogenesis. This is Protein QNR-71 (QNR-71) from Coturnix japonica (Japanese quail).